We begin with the raw amino-acid sequence, 525 residues long: MSEKTLATAVDKRRTFAIISHPDAGKTTITEQLLLFGGVVREAGTVKARKSGNFAKSDWMEIEQKRGISVTSSVMQFDYQGKRINILDTPGHEDFSEDTYRTLMAVDSAVMVIDSAKGIEPQTKKLFQICKMRGIPIFTFMNKLDRDGREPLDLIAELEDVLGIEGYPMNWPIGMGKELKGLYDRYHQRVALFRPEDDAHQYLPLNADGDLATANELEEDGLYQEARDNMLLIEEAGNQFDAAKIASGDQTPVFFGSALANFGVKTFLETYLEYAPQPASHQTPDGATVAPTDPEFSGFVFKIQANMNPNHRDRIAFVRICSGEFERGMDVIQERTGKKMRLSNVTEFMADTRENVETAVAGDIIGLYDTGNFQIGDAIYTGKTKIKFEKLPQFTPELFVRVAAKNVMKQKSFHKGINQLVQEGAVQLYTSYSTGDYILGAVGQLQFEVFQFRMQNEYNSEVIMEPMGKKTARWINPDQLDERMSSSRNLLVKDSQGAPLFLFENRFAERWFQDKYPDVELTAKL.

One can recognise a tr-type G domain in the interval 11 to 279 (DKRRTFAIIS…TYLEYAPQPA (269 aa)). Residues 20–27 (SHPDAGKT), 88–92 (DTPGH), and 142–145 (NKLD) each bind GTP.

It belongs to the TRAFAC class translation factor GTPase superfamily. Classic translation factor GTPase family. PrfC subfamily.

It localises to the cytoplasm. Its function is as follows. Increases the formation of ribosomal termination complexes and stimulates activities of RF-1 and RF-2. It binds guanine nucleotides and has strong preference for UGA stop codons. It may interact directly with the ribosome. The stimulation of RF-1 and RF-2 is significantly reduced by GTP and GDP, but not by GMP. In Levilactobacillus brevis (strain ATCC 367 / BCRC 12310 / CIP 105137 / JCM 1170 / LMG 11437 / NCIMB 947 / NCTC 947) (Lactobacillus brevis), this protein is Peptide chain release factor 3.